The sequence spans 180 residues: Nucleoid-associated protein At4g30620, chloroplastic (180 aa).

The N-terminal 48 residues, 1 to 48 (MASTATNTDFFKTLLSPFSNGNAAQRSSRQNIVWLNRKQSGNNNRSLR), are a transit peptide targeting the chloroplast. Positions 45 to 65 (RSLRVNGLFGGGKKDNKEDGQ) are disordered. The segment covering 56–65 (GKKDNKEDGQ) has biased composition (basic and acidic residues).

The protein belongs to the YbaB/EbfC family. Homodimer. Binds to the translation initiation factors TIF3E1.

The protein resides in the plastid. It is found in the chloroplast. Binds to DNA and alters its conformation. May be involved in regulation of gene expression, nucleoid organization and DNA protection. The sequence is that of Nucleoid-associated protein At4g30620, chloroplastic from Arabidopsis thaliana (Mouse-ear cress).